A 359-amino-acid polypeptide reads, in one-letter code: Membrane-bound lytic murein transglycosylase C (359 aa).

The N-terminal stretch at 1–16 is a signal peptide; that stretch reads MKKYLALALIAPLLIS. A lipid anchor (N-palmitoyl cysteine) is attached at cysteine 17. Cysteine 17 carries the S-diacylglycerol cysteine lipid modification.

It belongs to the transglycosylase Slt family.

The protein localises to the cell outer membrane. It carries out the reaction Exolytic cleavage of the (1-&gt;4)-beta-glycosidic linkage between N-acetylmuramic acid (MurNAc) and N-acetylglucosamine (GlcNAc) residues in peptidoglycan, from either the reducing or the non-reducing ends of the peptidoglycan chains, with concomitant formation of a 1,6-anhydrobond in the MurNAc residue.. In terms of biological role, murein-degrading enzyme. May play a role in recycling of muropeptides during cell elongation and/or cell division. This chain is Membrane-bound lytic murein transglycosylase C, found in Escherichia coli O7:K1 (strain IAI39 / ExPEC).